The following is a 356-amino-acid chain: Cytochrome c oxidase subunit 2 (356 aa).

The signal sequence occupies residues 1-20 (MVKHWRLILLLALVPLLLSG). Cys-21 carries the N-palmitoyl cysteine lipid modification. Cys-21 is lipidated: S-diacylglycerol cysteine. The Extracellular portion of the chain corresponds to 21–47 (CGKPFLSTLKPAGEVADKQYDLTVLST). A cytochrome c oxidase subunit II region spans residues 21 to 257 (CGKPFLSTLK…KNYKSTAESD (237 aa)). A helical transmembrane segment spans residues 48–66 (LIMVVVVAVVSVIFFYVIV). Residues 67-87 (RFRRSRVGENTIPKQVEGNKF) are Cytoplasmic-facing. The helical transmembrane segment at 88-106 (LEITWTVIPILLLIILVIP) threads the bilayer. Over 107 to 356 (VVLYTLELAD…YLKGLKAESK (250 aa)) the chain is Extracellular. 4 residues coordinate Cu cation: His-176, Cys-217, Cys-221, and His-225. In terms of domain architecture, Cytochrome c spans 258 to 356 (LAKQGEELFK…YLKGLKAESK (99 aa)). Heme c-binding residues include Cys-271, Cys-274, His-275, and Met-329.

The protein belongs to the cytochrome c oxidase subunit 2 family. Cu cation serves as cofactor. Requires heme c as cofactor.

The protein localises to the cell membrane. It catalyses the reaction 4 Fe(II)-[cytochrome c] + O2 + 8 H(+)(in) = 4 Fe(III)-[cytochrome c] + 2 H2O + 4 H(+)(out). In terms of biological role, subunits I and II form the functional core of the enzyme complex. Electrons originating in cytochrome c are transferred via heme a and Cu(A) to the binuclear center formed by heme a3 and Cu(B). This Bacillus subtilis (strain 168) protein is Cytochrome c oxidase subunit 2 (ctaC).